The chain runs to 348 residues: A-type ATP synthase subunit C (348 aa).

It belongs to the V-ATPase V0D/AC39 subunit family. Has multiple subunits with at least A(3), B(3), C, D, E, F, H, I and proteolipid K(x).

The protein localises to the cell membrane. Functionally, component of the A-type ATP synthase that produces ATP from ADP in the presence of a proton gradient across the membrane. This Halorubrum lacusprofundi (strain ATCC 49239 / DSM 5036 / JCM 8891 / ACAM 34) protein is A-type ATP synthase subunit C.